A 238-amino-acid polypeptide reads, in one-letter code: Uroporphyrinogen-III C-methyltransferase (238 aa).

S-adenosyl-L-homocysteine is bound by residues Pro11, 87-89 (GGD), 117-118 (TS), and Met170.

It belongs to the precorrin methyltransferase family. Monomer.

It carries out the reaction uroporphyrinogen III + 2 S-adenosyl-L-methionine = precorrin-2 + 2 S-adenosyl-L-homocysteine + H(+). It functions in the pathway cofactor biosynthesis; adenosylcobalamin biosynthesis; precorrin-2 from uroporphyrinogen III: step 1/1. The protein operates within porphyrin-containing compound metabolism; siroheme biosynthesis; precorrin-2 from uroporphyrinogen III: step 1/1. Its activity is regulated as follows. SUMT exhibits a substrate inhibition phenomenon at uroporphyrinogen III concentrations above 0.5 uM; this property might play a regulatory role in cobalamin biosynthesis. Its function is as follows. Catalyzes the two successive C-2 and C-7 methylation reactions involved in the conversion of uroporphyrinogen III to precorrin-2 via the intermediate formation of precorrin-1. It is a step in the biosynthesis of both cobalamin (vitamin B12) and siroheme. This Priestia megaterium (Bacillus megaterium) protein is Uroporphyrinogen-III C-methyltransferase.